A 171-amino-acid chain; its full sequence is Voltage-dependent P/Q-type calcium channel subunit alpha-1A (171 aa).

The chain crosses the membrane as a helical span at residues Phe1–Ile11. Residues Phe1 to Ile171 form an IV repeat. The Extracellular segment spans residues Leu12–Asn18. The helical transmembrane segment at Asn19–Leu37 threads the bilayer. The Cytoplasmic segment spans residues Leu38–Lys56. A helical transmembrane segment spans residues Ala57–Gly76. The Extracellular portion of the chain corresponds to Met77–Cys143. The chain crosses the membrane as a helical span at residues Gly144–Val168. The Cytoplasmic portion of the chain corresponds to Ala169–Ile171.

The protein belongs to the calcium channel alpha-1 subunit (TC 1.A.1.11) family. CACNA1A subfamily. Voltage-dependent calcium channels are multisubunit complexes, consisting of alpha-1, alpha-2, beta and delta subunits in a 1:1:1:1 ratio. The channel activity is directed by the pore-forming and voltage-sensitive alpha-1 subunit. In many cases, this subunit is sufficient to generate voltage-sensitive calcium channel activity. The auxiliary subunits beta and alpha-2/delta linked by a disulfide bridge regulate the channel activity.

The protein resides in the cell membrane. The catalysed reaction is Ca(2+)(in) = Ca(2+)(out). In terms of biological role, the isoform alpha-1A gives rise to P and/or Q-type calcium currents. P/Q-type calcium channels belong to the 'high-voltage activated' (HVA) group. This is Voltage-dependent P/Q-type calcium channel subunit alpha-1A (CACNA1A) from Gallus gallus (Chicken).